Here is a 190-residue protein sequence, read N- to C-terminus: dTTP/UTP pyrophosphatase (190 aa).

Aspartate 69 acts as the Proton acceptor in catalysis.

This sequence belongs to the Maf family. YhdE subfamily. Requires a divalent metal cation as cofactor.

The protein resides in the cytoplasm. The enzyme catalyses dTTP + H2O = dTMP + diphosphate + H(+). It carries out the reaction UTP + H2O = UMP + diphosphate + H(+). In terms of biological role, nucleoside triphosphate pyrophosphatase that hydrolyzes dTTP and UTP. May have a dual role in cell division arrest and in preventing the incorporation of modified nucleotides into cellular nucleic acids. This is dTTP/UTP pyrophosphatase from Sphingopyxis alaskensis (strain DSM 13593 / LMG 18877 / RB2256) (Sphingomonas alaskensis).